The chain runs to 560 residues: Glutamate--tRNA ligase (560 aa).

The 'HIGH' region motif lies at 108-118; the sequence is PNPSGPLHLGH.

This sequence belongs to the class-I aminoacyl-tRNA synthetase family. Glutamate--tRNA ligase type 2 subfamily.

It is found in the cytoplasm. The catalysed reaction is tRNA(Glu) + L-glutamate + ATP = L-glutamyl-tRNA(Glu) + AMP + diphosphate. Functionally, catalyzes the attachment of glutamate to tRNA(Glu) in a two-step reaction: glutamate is first activated by ATP to form Glu-AMP and then transferred to the acceptor end of tRNA(Glu). The polypeptide is Glutamate--tRNA ligase (Methanocorpusculum labreanum (strain ATCC 43576 / DSM 4855 / Z)).